A 392-amino-acid polypeptide reads, in one-letter code: 23S rRNA (uracil(747)-C(5))-methyltransferase RlmC (392 aa).

4 residues coordinate [4Fe-4S] cluster: cysteine 4, cysteine 12, cysteine 15, and cysteine 93. Positions 218, 247, 275, and 321 each coordinate S-adenosyl-L-methionine. Cysteine 348 (nucleophile) is an active-site residue.

This sequence belongs to the class I-like SAM-binding methyltransferase superfamily. RNA M5U methyltransferase family. RlmC subfamily.

The enzyme catalyses uridine(747) in 23S rRNA + S-adenosyl-L-methionine = 5-methyluridine(747) in 23S rRNA + S-adenosyl-L-homocysteine + H(+). In terms of biological role, catalyzes the formation of 5-methyl-uridine at position 747 (m5U747) in 23S rRNA. The polypeptide is 23S rRNA (uracil(747)-C(5))-methyltransferase RlmC (Haemophilus influenzae (strain 86-028NP)).